A 474-amino-acid chain; its full sequence is Cyclin-dependent kinase 2 homolog (474 aa).

The region spanning tyrosine 7–leucine 446 is the Protein kinase domain. ATP is bound by residues leucine 13–valine 21 and lysine 36. Threonine 17 is modified (phosphothreonine). Phosphotyrosine is present on tyrosine 18. Catalysis depends on aspartate 131, which acts as the Proton acceptor. Residues threonine 150 to alanine 200 form a disordered region. A Phosphoserine modification is found at serine 230. A compositionally biased stretch (low complexity) spans glutamine 334 to serine 354. The disordered stretch occupies residues glutamine 334–alanine 356.

This sequence belongs to the protein kinase superfamily. CMGC Ser/Thr protein kinase family. CDC2/CDKX subfamily. May form a complex composed of at least the catalytic subunit CRK2 and a cyclin. The cofactor is Mg(2+).

It is found in the cytoplasm. The enzyme catalyses L-seryl-[protein] + ATP = O-phospho-L-seryl-[protein] + ADP + H(+). It carries out the reaction L-threonyl-[protein] + ATP = O-phospho-L-threonyl-[protein] + ADP + H(+). It catalyses the reaction [DNA-directed RNA polymerase] + ATP = phospho-[DNA-directed RNA polymerase] + ADP + H(+). With respect to regulation, phosphorylation at Thr-17 or Tyr-18 inactivates the enzyme, while phosphorylation at Ser-230 activates it. Functionally, serine/threonine-protein kinase. Involved in the control of the cell cycle. Required for entry into S-phase and mitosis. Probable component of the kinase complex that phosphorylates the repetitive C-terminus of RNA polymerase II. The sequence is that of Cyclin-dependent kinase 2 homolog from Crithidia fasciculata.